A 601-amino-acid chain; its full sequence is MKLTREFPSNYAMAQWQPSDHKDAQVIGELFAHFGAERFTIQNTRTGVPVVWLSRELLLDVMGFLRKLPSPFVMLFDLSATDERMRSHRHDLPDSDFTVFYHLISIDRNADLMLKVPLKEGDLTLPTVSRHFPNANWYEREVWDLMGINFDGHPHLTRIMMPKSWQGHPLRKDYPARATEFDPFMLDAVKQDQEQDNLLFKPEEWGMARGNENEDYMFLNLGPNHPSAHGAFRLVLQLDGEEIRDCVPDIGYHHRGAEKMGERQSWHSYIPYTDRVEYLGGVMNNLPYVLAVEKLAGIKVPQRVDMIRVMLAELFRIQSHLLFIGTYIQDVGAMTPVFFTFTDRQRIYTIIEAITGARMHPAWFRIGGVAHDLPVGWQRLVQDNLLSWLPKRLMDYEKAAMRNSILRGRTIGVAAYNTEQALAWGTTGGGLRATGLNFDVRKWRPYSGYDQFEFEVPVGANGDAYDRALVRIEEVRQSMRIIEQCMKNMPEGPFKADHPLTTPPPKERTLQDIETLITHFLQVSWGPVMPAAESFQMIEATKGINSYYLTSDGSTMSYRTRIRTPSFAHLQQIPSVIRGQMVSDLIVYLGSIDFVMSDVDR.

The interval 1–191 (MKLTREFPSN…DPFMLDAVKQ (191 aa)) is NADH dehydrogenase I subunit C. An NADH dehydrogenase I subunit D region spans residues 215-601 (DYMFLNLGPN…IDFVMSDVDR (387 aa)).

This sequence in the N-terminal section; belongs to the complex I 30 kDa subunit family. It in the C-terminal section; belongs to the complex I 49 kDa subunit family. As to quaternary structure, NDH-1 is composed of 13 different subunits. Subunits NuoB, CD, E, F, and G constitute the peripheral sector of the complex.

Its subcellular location is the cell inner membrane. It catalyses the reaction a quinone + NADH + 5 H(+)(in) = a quinol + NAD(+) + 4 H(+)(out). Functionally, NDH-1 shuttles electrons from NADH, via FMN and iron-sulfur (Fe-S) centers, to quinones in the respiratory chain. The immediate electron acceptor for the enzyme in this species is believed to be ubiquinone. Couples the redox reaction to proton translocation (for every two electrons transferred, four hydrogen ions are translocated across the cytoplasmic membrane), and thus conserves the redox energy in a proton gradient. This Aeromonas hydrophila subsp. hydrophila (strain ATCC 7966 / DSM 30187 / BCRC 13018 / CCUG 14551 / JCM 1027 / KCTC 2358 / NCIMB 9240 / NCTC 8049) protein is NADH-quinone oxidoreductase subunit C/D.